A 136-amino-acid chain; its full sequence is Large ribosomal subunit protein eL27A (136 aa).

The protein belongs to the eukaryotic ribosomal protein eL27 family. Component of the large ribosomal subunit (LSU). Mature yeast ribosomes consist of a small (40S) and a large (60S) subunit. The 40S small subunit contains 1 molecule of ribosomal RNA (18S rRNA) and at least 33 different proteins. The large 60S subunit contains 3 rRNA molecules (25S, 5.8S and 5S rRNA) and at least 46 different proteins.

The protein localises to the cytoplasm. It localises to the nucleus. Component of the ribosome, a large ribonucleoprotein complex responsible for the synthesis of proteins in the cell. The small ribosomal subunit (SSU) binds messenger RNAs (mRNAs) and translates the encoded message by selecting cognate aminoacyl-transfer RNA (tRNA) molecules. The large subunit (LSU) contains the ribosomal catalytic site termed the peptidyl transferase center (PTC), which catalyzes the formation of peptide bonds, thereby polymerizing the amino acids delivered by tRNAs into a polypeptide chain. The nascent polypeptides leave the ribosome through a tunnel in the LSU and interact with protein factors that function in enzymatic processing, targeting, and the membrane insertion of nascent chains at the exit of the ribosomal tunnel. The polypeptide is Large ribosomal subunit protein eL27A (rpl2701) (Schizosaccharomyces pombe (strain 972 / ATCC 24843) (Fission yeast)).